The primary structure comprises 168 residues: Ribosome-binding factor A (168 aa).

Basic and acidic residues predominate over residues 122–136 (VRRDARPAGDDDPYR). A disordered region spans residues 122-168 (VRRDARPAGDDDPYRRPRPAAGEVDELSEVDELSEVDEYGGTARQEG). The segment covering 144–159 (EVDELSEVDELSEVDE) has biased composition (acidic residues).

The protein belongs to the RbfA family. As to quaternary structure, monomer. Binds 30S ribosomal subunits, but not 50S ribosomal subunits or 70S ribosomes.

Its subcellular location is the cytoplasm. Functionally, one of several proteins that assist in the late maturation steps of the functional core of the 30S ribosomal subunit. Associates with free 30S ribosomal subunits (but not with 30S subunits that are part of 70S ribosomes or polysomes). Required for efficient processing of 16S rRNA. May interact with the 5'-terminal helix region of 16S rRNA. The chain is Ribosome-binding factor A from Frankia casuarinae (strain DSM 45818 / CECT 9043 / HFP020203 / CcI3).